The sequence spans 176 residues: Flavodoxin-like domain-containing protein BilS (176 aa).

Its pathway is porphyrin-containing compound metabolism; protoheme degradation. Functionally, together with BilR, catalyzes reduction of mesobilirubin and/or bilirubin to urobilinogen, a key step during heme degradation. BilS is probably involved in electron transfer for the bilirubin reductase BilR. In Clostridioides difficile (strain CD3), this protein is Flavodoxin-like domain-containing protein BilS.